Here is a 94-residue protein sequence, read N- to C-terminus: Large ribosomal subunit protein uL29 (94 aa).

The segment at 66–94 (NPGERKSRVLSRAKRKKKNLARLSAKVKG) is disordered. Residues 73 to 94 (RVLSRAKRKKKNLARLSAKVKG) show a composition bias toward basic residues.

This sequence belongs to the universal ribosomal protein uL29 family.

This chain is Large ribosomal subunit protein uL29, found in Leptospira borgpetersenii serovar Hardjo-bovis (strain JB197).